Reading from the N-terminus, the 215-residue chain is Golgi-associated RAB2 interactor protein 5A (215 aa).

Disordered stretches follow at residues 1–20 (MKRG…AGPG) and 174–215 (QDYS…LWGL). Acidic residues predominate over residues 178 to 191 (ALEDDEDDDEDEDR).

It belongs to the GARIN family. As to quaternary structure, interacts (via N-terminus) with RAB2B (in GTP-bound form).

Its subcellular location is the golgi apparatus. In terms of biological role, RAB2B effector protein which promotes cytosolic DNA-induced innate immune responses. Regulates IFN responses against DNA viruses by regulating the CGAS-STING signaling axis. The chain is Golgi-associated RAB2 interactor protein 5A (GARIN5A) from Bos taurus (Bovine).